Consider the following 190-residue polypeptide: Dynactin subunit 6 (190 aa).

Position 186 is a phosphothreonine; by CDK1 (Thr-186).

Belongs to the dynactin subunits 5/6 family. Dynactin subunit 6 subfamily. In terms of assembly, subunit of dynactin, a multiprotein complex part of a tripartite complex with dynein and a adapter, such as BICDL1, BICD2 or HOOK3. The dynactin complex is built around ACTR1A/ACTB filament and consists of an actin-related filament composed of a shoulder domain, a pointed end and a barbed end. Its length is defined by its flexible shoulder domain. The soulder is composed of 2 DCTN1 subunits, 4 DCTN2 and 2 DCTN3. The 4 DCNT2 (via N-terminus) bind the ACTR1A filament and act as molecular rulers to determine the length. The pointed end is important for binding dynein-dynactin cargo adapters. Consists of 4 subunits: ACTR10, DCNT4, DCTN5 and DCTN6. Within the complex DCTN6 forms a heterodimer with DCTN5. The barbed end is composed of a CAPZA1:CAPZB heterodimers, which binds ACTR1A/ACTB filament and dynactin and stabilizes dynactin. Interacts with PLK1. Interacts with N4BP2L1. Post-translationally, phosphorylation at Thr-186 by CDK1 during mitotic prometaphase creates a binding site for PLK1 that facilitates its recruitment to kinetochores. As to expression, ubiquitous.

It is found in the cytoplasm. Its subcellular location is the cytoskeleton. The protein resides in the chromosome. The protein localises to the centromere. It localises to the kinetochore. Its function is as follows. Part of the dynactin complex that activates the molecular motor dynein for ultra-processive transport along microtubules. In Homo sapiens (Human), this protein is Dynactin subunit 6.